Here is a 116-residue protein sequence, read N- to C-terminus: UPF0342 protein CTC_01059 (116 aa).

It belongs to the UPF0342 family.

The protein is UPF0342 protein CTC_01059 of Clostridium tetani (strain Massachusetts / E88).